Reading from the N-terminus, the 409-residue chain is Arginine deiminase (409 aa).

Cysteine 399 acts as the Amidino-cysteine intermediate in catalysis.

This sequence belongs to the arginine deiminase family.

The protein localises to the cytoplasm. It carries out the reaction L-arginine + H2O = L-citrulline + NH4(+). The protein operates within amino-acid degradation; L-arginine degradation via ADI pathway; carbamoyl phosphate from L-arginine: step 1/2. The sequence is that of Arginine deiminase (arcA) from Borreliella afzelii (Borrelia afzelii).